Reading from the N-terminus, the 581-residue chain is Adenine deaminase (581 aa).

The protein belongs to the metallo-dependent hydrolases superfamily. Adenine deaminase family. Mn(2+) serves as cofactor.

It catalyses the reaction adenine + H2O + H(+) = hypoxanthine + NH4(+). The chain is Adenine deaminase from Clostridium botulinum (strain Eklund 17B / Type B).